The chain runs to 354 residues: Trans-enoyl reductase pydC (354 aa).

Positions 16–342 (ANTDPVTFEI…RREVSGEKIV (327 aa)) constitute an Enoyl reductase (ER) domain. Residues 51 to 54 (CDYK), 180 to 183 (SPKN), Tyr198, 245 to 246 (FE), and 336 to 337 (VS) each bind NADP(+).

It belongs to the zinc-containing alcohol dehydrogenase family. Monomer.

It functions in the pathway mycotoxin biosynthesis. Trans-enoyl reductase; part of the gene cluster that mediates the biosynthesis of pyrrocidines, fungal natural products containing a macrocyclic para-cyclophane connected to a decahydrofluorene ring system that show potent antibiotic activities toward Gram-negative bacteria. Within the pathway, the PKS-NRPS pydA, with the help of the trans-enoyl reductase pydC, synthesize the polyketide-tyrosyl acyl thioester product which can be reductively off-loaded by the terminal reductase (R) domain in pydA. The PKS module of pydA acts in combination with the trans-acting enoyl reductase pydC to produce a methylated polyketide attached to the ACP domain. In parallel, the adenylation (A) domain of the NRPS module activated L-tyrosine, which is then transferred to the ACP domain. The condensation (C) domain subsequently link this group to the polyketide chain, forming an enzyme-bound amide. The alpha/beta hydrolase pydG is then required to catalyze the subsequent Knoevenagel condensation that affords the 3-pyrrolin-2-one ring, whereas the four proteins pydB, pydE, pydX and pydZ then function synergistically to form the cyclophane. PydB and the membrane-bound pydX and pydZ are lipid-binding proteins that can sequester and mold the pdyG product into the inverse S-shape. Binding of the medium chain reductase pydE to the complex would trigger the cascade oxidative cyclization. PydY is involved in the Diels-Alder cycloaddition that forms the decahydrofluorene core. Additional non-enzymatic hydroxylation yields pyrrocidine A2 which can be further reduced into pyrrocidine B by an endogenous reductase. This Acremonium sp protein is Trans-enoyl reductase pydC.